We begin with the raw amino-acid sequence, 270 residues long: Proteasome subunit beta (270 aa).

Positions 1 to 47 are cleaved as a propeptide — removed in mature form; by autocatalysis; sequence MSNRGRLGDAFLRPGSSSFLDFLSDHAPELLPGRSAAAGNAPLAPHA. Thr-48 acts as the Nucleophile in catalysis.

The protein belongs to the peptidase T1B family. As to quaternary structure, the 20S proteasome core is composed of 14 alpha and 14 beta subunits that assemble into four stacked heptameric rings, resulting in a barrel-shaped structure. The two inner rings, each composed of seven catalytic beta subunits, are sandwiched by two outer rings, each composed of seven alpha subunits. The catalytic chamber with the active sites is on the inside of the barrel. Has a gated structure, the ends of the cylinder being occluded by the N-termini of the alpha-subunits. Is capped by the proteasome-associated ATPase, ARC.

The protein localises to the cytoplasm. The catalysed reaction is Cleavage of peptide bonds with very broad specificity.. It participates in protein degradation; proteasomal Pup-dependent pathway. With respect to regulation, the formation of the proteasomal ATPase ARC-20S proteasome complex, likely via the docking of the C-termini of ARC into the intersubunit pockets in the alpha-rings, may trigger opening of the gate for substrate entry. Interconversion between the open-gate and close-gate conformations leads to a dynamic regulation of the 20S proteasome proteolysis activity. In terms of biological role, component of the proteasome core, a large protease complex with broad specificity involved in protein degradation. The polypeptide is Proteasome subunit beta (Xylanimonas cellulosilytica (strain DSM 15894 / JCM 12276 / CECT 5975 / KCTC 9989 / LMG 20990 / NBRC 107835 / XIL07)).